The chain runs to 106 residues: ATP-dependent Clp protease adapter protein ClpS (106 aa).

It belongs to the ClpS family. As to quaternary structure, binds to the N-terminal domain of the chaperone ClpA.

Functionally, involved in the modulation of the specificity of the ClpAP-mediated ATP-dependent protein degradation. The protein is ATP-dependent Clp protease adapter protein ClpS of Vibrio parahaemolyticus serotype O3:K6 (strain RIMD 2210633).